A 1101-amino-acid polypeptide reads, in one-letter code: Rho GTPase-activating protein 30 (1101 aa).

Residues Cys20–Phe215 form the Rho-GAP domain. 3 disordered regions span residues Glu224–Asp243, His300–Gly400, and Ala451–Gly529. The span at Arg308–Asn318 shows a compositional bias: basic and acidic residues. A compositionally biased stretch (acidic residues) spans Leu360–Ala376. Positions Ala459 to Pro472 are enriched in pro residues. The segment covering Asp508–Glu520 has biased composition (low complexity). Ser576 carries the post-translational modification Phosphoserine. 2 disordered regions span residues Gly621–Pro906 and Cys965–Asn991. 4 stretches are compositionally biased toward basic and acidic residues: residues Gly658–Glu694, Thr701–Glu735, Glu759–Glu770, and Ala779–Ser822. Low complexity predominate over residues Gly976–Asn991. Phosphoserine is present on Ser996. Residues Leu1050–Leu1101 form a disordered region. Low complexity predominate over residues Pro1053–Pro1069. Residues Leu1080 to Asn1094 are compositionally biased toward polar residues.

In terms of assembly, interacts with RHOU in a GTP-independent manner.

Its subcellular location is the cytoplasmic vesicle. In terms of biological role, GTPase-activating protein (GAP) for RAC1 and RHOA, but not for CDC42. The chain is Rho GTPase-activating protein 30 (ARHGAP30) from Homo sapiens (Human).